Reading from the N-terminus, the 513-residue chain is ATP synthase subunit alpha (513 aa).

Residue 169 to 176 (GDRQTGKT) participates in ATP binding.

The protein belongs to the ATPase alpha/beta chains family. F-type ATPases have 2 components, CF(1) - the catalytic core - and CF(0) - the membrane proton channel. CF(1) has five subunits: alpha(3), beta(3), gamma(1), delta(1), epsilon(1). CF(0) has three main subunits: a(1), b(2) and c(9-12). The alpha and beta chains form an alternating ring which encloses part of the gamma chain. CF(1) is attached to CF(0) by a central stalk formed by the gamma and epsilon chains, while a peripheral stalk is formed by the delta and b chains.

Its subcellular location is the cell inner membrane. The enzyme catalyses ATP + H2O + 4 H(+)(in) = ADP + phosphate + 5 H(+)(out). Functionally, produces ATP from ADP in the presence of a proton gradient across the membrane. The alpha chain is a regulatory subunit. In Bordetella pertussis (strain Tohama I / ATCC BAA-589 / NCTC 13251), this protein is ATP synthase subunit alpha.